Consider the following 232-residue polypeptide: Platelet-activating factor acetylhydrolase IB subunit alpha1 (232 aa).

Positions 1–20 are disordered; it reads MSGEGENPASKPTPVQDVQG. Position 2 is an N-acetylserine (Ser-2). A Phosphoserine modification is found at Ser-2. Active-site residues include Ser-48, Asp-193, and His-196.

It belongs to the 'GDSL' lipolytic enzyme family. Platelet-activating factor acetylhydrolase IB beta/gamma subunits subfamily. As to quaternary structure, forms a catalytic dimer which is either homodimer (alpha1/alpha1 homodimer) or heterodimer with PAFAH1B2 (alpha1/alpha2 heterodimer). Component of the cytosolic (PAF-AH (I)) heterotetrameric enzyme, which is composed of PAFAH1B1 (beta), PAFAH1B2 (alpha2) and PAFAH1B3 (alpha1) subunits. The catalytic activity of the enzyme resides in the alpha1 (PAFAH1B3) and alpha2 (PAFAH1B2) subunits, whereas the beta subunit (PAFAH1B1) has regulatory activity. Trimer formation is not essential for the catalytic activity. Interacts with VLDLR; this interaction may modulate the Reelin pathway.

The protein localises to the cytoplasm. It catalyses the reaction a 1-O-alkyl-2-acetyl-sn-glycero-3-phosphocholine + H2O = a 1-O-alkyl-sn-glycero-3-phosphocholine + acetate + H(+). The catalysed reaction is 1-O-hexadecyl-2-acetyl-sn-glycero-3-phosphocholine + H2O = 1-O-hexadecyl-sn-glycero-3-phosphocholine + acetate + H(+). It carries out the reaction 1-O-hexadecyl-2-acetyl-sn-glycero-3-phosphate + H2O = 1-O-hexadecyl-sn-glycero-3-phosphate + acetate + H(+). With respect to regulation, beta subunit (PAFAH1B1) inhibits the acetylhydrolase activity of the alpha1/alpha1 catalytic homodimer. Alpha1 catalytic subunit of the cytosolic type I platelet-activating factor (PAF) acetylhydrolase (PAF-AH (I)) heterotetrameric enzyme that catalyzes the hydrolyze of the acetyl group at the sn-2 position of PAF and its analogs and modulates the action of PAF. The activity and substrate specificity of PAF-AH (I) are affected by its subunit composition. Both alpha1/alpha1 homodimer (PAFAH1B3/PAFAH1B3 homodimer) and alpha1/alpha2 heterodimer(PAFAH1B3/PAFAH1B2 heterodimer) hydrolyze 1-O-alkyl-2-acetyl-sn-glycero-3-phosphoric acid (AAGPA) more efficiently than PAF, but they have little hydrolytic activity towards 1-O-alkyl-2-acetyl-sn-glycero-3-phosphorylethanolamine (AAGPE). Plays an important role during the development of brain. This is Platelet-activating factor acetylhydrolase IB subunit alpha1 from Mus musculus (Mouse).